Reading from the N-terminus, the 357-residue chain is MDNYEKVRVVGRGAFGVCWLCRGKNDASHQKVIIKLINTHGMTEKEENSIQSEVNLLKKVQHPLIIGYIDSFIMDNQLGIVMQYAEGGTLERLINDQRAIKDSNMREYFPEKTVLDYFTQILIALNHMHQKNIVHRDLKPQNILMNRRKTVLKLSDFGISKELGTKSAASTVIGTPNYLSPEICESRPYNQKSDMWSLGCVLYELLQLERAFDGENLPAIVMKITRSKQNPLGDHVSNDVKMLVENLLKTHTDKRPDVSQLLSDPLVLPYLISIHCDLGRIEPPPTDKRKPSASLSSRLRTYPTQSTLRPYSLSSNAPTTHLTQLTPMPSHIDSGFFSSGRTSNQRTQSRSQVHSKY.

The region spanning 4–267 is the Protein kinase domain; that stretch reads YEKVRVVGRG…VSQLLSDPLV (264 aa). Residues 10–18 and Lys35 each bind ATP; that span reads VGRGAFGVC. The Proton acceptor role is filled by Asp137. Residues 281–290 show a composition bias toward basic and acidic residues; that stretch reads IEPPPTDKRK. The segment at 281-357 is disordered; that stretch reads IEPPPTDKRK…QSRSQVHSKY (77 aa). 2 stretches are compositionally biased toward polar residues: residues 293-327 and 336-357; these read ASLS…QLTP and FFSS…HSKY.

Belongs to the protein kinase superfamily. NEK Ser/Thr protein kinase family. NIMA subfamily. Mg(2+) serves as cofactor. In terms of tissue distribution, expressed in hypodermal cells including in hyp7 syncytium but not in seam cells.

Its subcellular location is the cytoplasm. The catalysed reaction is L-seryl-[protein] + ATP = O-phospho-L-seryl-[protein] + ADP + H(+). It carries out the reaction L-threonyl-[protein] + ATP = O-phospho-L-threonyl-[protein] + ADP + H(+). In terms of biological role, probable serine/threonine-protein kinase required for the completion of molting. May play a role in endocytosis in the hypodermis syncytium. The chain is Serine/threonine-protein kinase nekl-2 from Caenorhabditis elegans.